The chain runs to 412 residues: Imidazolonepropionase (412 aa).

2 residues coordinate Fe(3+): His76 and His78. Zn(2+) is bound by residues His76 and His78. Residues Arg85, Tyr148, and His181 each coordinate 4-imidazolone-5-propanoate. Tyr148 provides a ligand contact to N-formimidoyl-L-glutamate. His242 serves as a coordination point for Fe(3+). His242 contributes to the Zn(2+) binding site. Glu245 is a binding site for 4-imidazolone-5-propanoate. Asp317 contributes to the Fe(3+) binding site. Asp317 serves as a coordination point for Zn(2+). Residues Asn319 and Gly321 each coordinate N-formimidoyl-L-glutamate. Ser322 provides a ligand contact to 4-imidazolone-5-propanoate.

The protein belongs to the metallo-dependent hydrolases superfamily. HutI family. Zn(2+) is required as a cofactor. The cofactor is Fe(3+).

The protein resides in the cytoplasm. It carries out the reaction 4-imidazolone-5-propanoate + H2O = N-formimidoyl-L-glutamate. Its pathway is amino-acid degradation; L-histidine degradation into L-glutamate; N-formimidoyl-L-glutamate from L-histidine: step 3/3. Functionally, catalyzes the hydrolytic cleavage of the carbon-nitrogen bond in imidazolone-5-propanoate to yield N-formimidoyl-L-glutamate. It is the third step in the universal histidine degradation pathway. This is Imidazolonepropionase from Staphylococcus aureus (strain bovine RF122 / ET3-1).